Here is a 158-residue protein sequence, read N- to C-terminus: 6,7-dimethyl-8-ribityllumazine synthase (158 aa).

Residues phenylalanine 22, 57-59 (AYE), and 84-86 (TVI) contribute to the 5-amino-6-(D-ribitylamino)uracil site. A (2S)-2-hydroxy-3-oxobutyl phosphate-binding site is contributed by 89 to 90 (GT). Histidine 92 serves as the catalytic Proton donor. Phenylalanine 117 provides a ligand contact to 5-amino-6-(D-ribitylamino)uracil. Arginine 131 is a (2S)-2-hydroxy-3-oxobutyl phosphate binding site.

Belongs to the DMRL synthase family. In terms of assembly, forms an icosahedral capsid composed of 60 subunits, arranged as a dodecamer of pentamers.

The catalysed reaction is (2S)-2-hydroxy-3-oxobutyl phosphate + 5-amino-6-(D-ribitylamino)uracil = 6,7-dimethyl-8-(1-D-ribityl)lumazine + phosphate + 2 H2O + H(+). The protein operates within cofactor biosynthesis; riboflavin biosynthesis; riboflavin from 2-hydroxy-3-oxobutyl phosphate and 5-amino-6-(D-ribitylamino)uracil: step 1/2. Catalyzes the formation of 6,7-dimethyl-8-ribityllumazine by condensation of 5-amino-6-(D-ribitylamino)uracil with 3,4-dihydroxy-2-butanone 4-phosphate. This is the penultimate step in the biosynthesis of riboflavin. This Pectobacterium carotovorum subsp. carotovorum (strain PC1) protein is 6,7-dimethyl-8-ribityllumazine synthase.